The primary structure comprises 185 residues: Ribosome-recycling factor (185 aa).

The protein belongs to the RRF family.

It is found in the cytoplasm. Responsible for the release of ribosomes from messenger RNA at the termination of protein biosynthesis. May increase the efficiency of translation by recycling ribosomes from one round of translation to another. The protein is Ribosome-recycling factor of Streptococcus uberis (strain ATCC BAA-854 / 0140J).